The following is a 134-amino-acid chain: (R)-specific enoyl-CoA hydratase (134 aa).

A MaoC-like domain is found at 5–119; it reads SLEVGQKARL…ATLTTRIFTQ (115 aa). A (3R)-3-hydroxyacyl-CoA contacts are provided by residues 32–37, glycine 55, and phenylalanine 84; that span reads DFNPLH.

As to quaternary structure, homodimer.

The enzyme catalyses a (3R)-3-hydroxyacyl-CoA = a (2E)-enoyl-CoA + H2O. Catalyzes the hydration of trans-2-enoyl-CoA with a chain-length of 4-6 carbon atoms, forming the corresponding (3R)-3-hydroxyacyl-CoA. This Aeromonas caviae (Aeromonas punctata) protein is (R)-specific enoyl-CoA hydratase (phaJ).